The primary structure comprises 1027 residues: Transient-receptor-potential-like protein (1027 aa).

The interval 1–22 is disordered; it reads MTKEGMLSAAGRRFSRCAPSPR. 3 ANK repeats span residues 85 to 115, 117 to 141, and 163 to 192; these read MGRTALEIAVDNENMEVVELLLQQPDIRIGN, LLCAIREGVYRLVEVLVNHPNITRE, and SDISPVILAAQLNQFEILQMLIRKDASIEK. Transmembrane regions (helical) follow at residues 355-375, 391-411, 473-493, 516-536, 559-579, and 640-660; these read FFLYAFLLFLWPIFCLMYILM, FFYYSVSFATFLGLLTWATFE, FLMICLYLCTISIRLSAYYIF, VAEALFAVGNVFSFARIIYLF, FCFIFVLIISSFSIGLAQLYW, and MFIMYHCTSIIVLLNMLIAMM. 2 disordered regions span residues 825-929 and 1008-1027; these read KRDI…TYTS and ENVKSPSPASHSHVGFNVEK. The segment covering 855 to 874 has biased composition (acidic residues); sequence EESEEDDKSDETSSTDEEAD. The segment covering 910–923 has biased composition (basic and acidic residues); it reads RASEADSKLPDRPL. The segment covering 1008 to 1017 has biased composition (polar residues); that stretch reads ENVKSPSPAS.

This sequence belongs to the transient receptor (TC 1.A.4) family. STrpC subfamily.

It is found in the membrane. Its function is as follows. Could mediate calcium entry and form a calcium permeant channel. This chain is Transient-receptor-potential-like protein (trp-1), found in Caenorhabditis elegans.